Reading from the N-terminus, the 794-residue chain is Ribonucleoside-diphosphate reductase large subunit (794 aa).

Positions 1–92 (MHVIKRDGGQ…VSNLHKETKK (92 aa)) constitute an ATP-cone domain. ATP-binding positions include 5–6 (KR), 11–17 (EGVMFDK), T53, and D57. Positions 202 and 217 each coordinate GDP. C218 and C444 are joined by a disulfide. Residues 226 to 228 (DSI), K243, R256, and 263 to 264 (AG) contribute to the dTTP site. N427 contributes to the GDP binding site. N427 (proton acceptor) is an active-site residue. C429 (cysteine radical intermediate) is an active-site residue. GDP contacts are provided by residues E431 and 604-607 (TAST). Catalysis depends on E431, which acts as the Proton acceptor.

It belongs to the ribonucleoside diphosphate reductase large chain family. As to quaternary structure, heterodimer of a large and a small subunit.

The protein resides in the cytoplasm. It carries out the reaction a 2'-deoxyribonucleoside 5'-diphosphate + [thioredoxin]-disulfide + H2O = a ribonucleoside 5'-diphosphate + [thioredoxin]-dithiol. Its activity is regulated as follows. Under complex allosteric control mediated by deoxynucleoside triphosphates and ATP binding to separate specificity and activation sites on the M1 subunit. The type of nucleotide bound at the specificity site determines substrate preference. It seems probable that ATP makes the enzyme reduce CDP and UDP, dGTP favors ADP reduction and dTTP favors GDP reduction. Stimulated by ATP and inhibited by dATP binding to the activity site. Functionally, provides the precursors necessary for DNA synthesis. Catalyzes the biosynthesis of deoxyribonucleotides from the corresponding ribonucleotides. The chain is Ribonucleoside-diphosphate reductase large subunit (rrm1) from Danio rerio (Zebrafish).